A 719-amino-acid chain; its full sequence is Catalase-3 (719 aa).

A signal peptide spans 1-18; it reads MRVNALLPLSGLIGTALA. The propeptide occupies 19–30; the sequence is ACPFADPSALGR. Residues histidine 102 and asparagine 175 contribute to the active site. Residue tyrosine 389 coordinates heme.

The protein belongs to the catalase family. It depends on heme as a cofactor.

It carries out the reaction 2 H2O2 = O2 + 2 H2O. In terms of biological role, occurs in almost all aerobically respiring organisms and serves to protect cells from the toxic effects of hydrogen peroxide. This chain is Catalase-3 (cat-3), found in Neurospora crassa (strain ATCC 24698 / 74-OR23-1A / CBS 708.71 / DSM 1257 / FGSC 987).